A 344-amino-acid polypeptide reads, in one-letter code: Trace amine-associated receptor 8c (344 aa).

Residues 1 to 31 lie on the Extracellular side of the membrane; that stretch reads MTSNFSQPALQLCYENTNGSCIKTPYSPGPR. N-linked (GlcNAc...) asparagine glycans are attached at residues N4 and N18. Cystine bridges form between C21/C185 and C104/C189. The helical transmembrane segment at 32–52 threads the bilayer; sequence VILYMVYGFGAVLAVCGNLLV. At 53–67 the chain is on the cytoplasmic side; that stretch reads VISVLHFKQLHSPAN. Residues 68 to 88 traverse the membrane as a helical segment; it reads FLIASLASADFLVGISVMPFS. The Extracellular portion of the chain corresponds to 89-111; that stretch reads MVRSIESCWYFGDAFCSLHSCCD. A helical transmembrane segment spans residues 112 to 132; sequence VAFCYSSALHLCFISVDRYIA. Residues 133–146 lie on the Cytoplasmic side of the membrane; the sequence is VTDPLVYPTKFTVS. The helical transmembrane segment at 147-167 threads the bilayer; sequence VSGICISISWILPLVYSSAVF. Over 168–195 the chain is Extracellular; sequence YTGISAKGIESLVSALNCVGGCQVVVNQ. The chain crosses the membrane as a helical span at residues 196–216; that stretch reads DWVLISFLLFFIPTVVMIILY. Over 217–260 the chain is Cytoplasmic; sequence SKIFLVAKQQAVKIETSVSGNRGESSSESHKARVAKRERKAAKT. A helical membrane pass occupies residues 261-281; sequence LGVTVVAFMVSWLPYTIDALV. Position 282 (D282) is a topological domain, extracellular. A helical membrane pass occupies residues 283–303; the sequence is AFMGFITPAYVYEICCWSAYY. Topologically, residues 304-344 are cytoplasmic; sequence NSAMNPLIYAFFYPWFRKAIKLILSGKILKGHSSTTNLFSE.

The protein belongs to the G-protein coupled receptor 1 family. As to expression, specifically expressed in neurons of the olfactory epithelium.

Its subcellular location is the cell membrane. Its function is as follows. Olfactory receptor specific for trace amines, such ascyclohexylamine (1-MPD). Trace amine compounds are enriched in animal body fluids and act on trace amine-associated receptors (TAARs) to elicit both intraspecific and interspecific innate behaviors. Ligand-binding causes a conformation change that triggers signaling via G(s)-class of G alpha proteins (GNAL or GNAS). This chain is Trace amine-associated receptor 8c, found in Mus musculus (Mouse).